The following is a 244-amino-acid chain: Phosphoadenosine 5'-phosphosulfate reductase (244 aa).

C239 functions as the Nucleophile; cysteine thiosulfonate intermediate in the catalytic mechanism.

The protein belongs to the PAPS reductase family. CysH subfamily.

Its subcellular location is the cytoplasm. It carries out the reaction [thioredoxin]-disulfide + sulfite + adenosine 3',5'-bisphosphate + 2 H(+) = [thioredoxin]-dithiol + 3'-phosphoadenylyl sulfate. The protein operates within sulfur metabolism; hydrogen sulfide biosynthesis; sulfite from sulfate: step 3/3. Functionally, catalyzes the formation of sulfite from phosphoadenosine 5'-phosphosulfate (PAPS) using thioredoxin as an electron donor. This Serratia proteamaculans (strain 568) protein is Phosphoadenosine 5'-phosphosulfate reductase.